Consider the following 340-residue polypeptide: S-adenosylmethionine:tRNA ribosyltransferase-isomerase (340 aa).

It belongs to the QueA family. Monomer.

Its subcellular location is the cytoplasm. The enzyme catalyses 7-aminomethyl-7-carbaguanosine(34) in tRNA + S-adenosyl-L-methionine = epoxyqueuosine(34) in tRNA + adenine + L-methionine + 2 H(+). It functions in the pathway tRNA modification; tRNA-queuosine biosynthesis. Functionally, transfers and isomerizes the ribose moiety from AdoMet to the 7-aminomethyl group of 7-deazaguanine (preQ1-tRNA) to give epoxyqueuosine (oQ-tRNA). The polypeptide is S-adenosylmethionine:tRNA ribosyltransferase-isomerase (Chromobacterium violaceum (strain ATCC 12472 / DSM 30191 / JCM 1249 / CCUG 213 / NBRC 12614 / NCIMB 9131 / NCTC 9757 / MK)).